The sequence spans 181 residues: Adenylate kinase (181 aa).

10 to 15 is a binding site for ATP; that stretch reads GAGKGT. The tract at residues 30 to 59 is NMP; that stretch reads STGDLFRANIGEGTPLGKEAKSYIDAGKLV. AMP is bound by residues T31, R36, 57–59, 85–88, and Q92; these read KLV and GFPR. The tract at residues 126-132 is LID; sequence ARGRADD. R127 is a binding site for ATP. The AMP site is built by R129 and R140. Residue G166 coordinates ATP.

The protein belongs to the adenylate kinase family. As to quaternary structure, monomer.

It localises to the cytoplasm. It catalyses the reaction AMP + ATP = 2 ADP. It functions in the pathway purine metabolism; AMP biosynthesis via salvage pathway; AMP from ADP: step 1/1. Catalyzes the reversible transfer of the terminal phosphate group between ATP and AMP. Plays an important role in cellular energy homeostasis and in adenine nucleotide metabolism. The sequence is that of Adenylate kinase from Corynebacterium diphtheriae (strain ATCC 700971 / NCTC 13129 / Biotype gravis).